The primary structure comprises 183 residues: Acireductone dioxygenase (183 aa).

The segment at 1 to 21 is disordered; that stretch reads MVQAWYMDSDTTTDQREEHQL. Fe(2+) is bound by residues histidine 90, histidine 92, glutamate 96, and histidine 135. 4 residues coordinate Ni(2+): histidine 90, histidine 92, glutamate 96, and histidine 135.

It belongs to the acireductone dioxygenase (ARD) family. The cofactor is Fe(2+). It depends on Ni(2+) as a cofactor.

It localises to the cytoplasm. Its subcellular location is the nucleus. The enzyme catalyses 1,2-dihydroxy-5-(methylsulfanyl)pent-1-en-3-one + O2 = 4-methylsulfanyl-2-oxobutanoate + formate + 2 H(+). The catalysed reaction is 1,2-dihydroxy-5-(methylsulfanyl)pent-1-en-3-one + O2 = 3-(methylsulfanyl)propanoate + CO + formate + 2 H(+). Its pathway is amino-acid biosynthesis; L-methionine biosynthesis via salvage pathway; L-methionine from S-methyl-5-thio-alpha-D-ribose 1-phosphate: step 5/6. Its function is as follows. Catalyzes 2 different reactions between oxygen and the acireductone 1,2-dihydroxy-3-keto-5-methylthiopentene (DHK-MTPene) depending upon the metal bound in the active site. Fe-containing acireductone dioxygenase (Fe-ARD) produces formate and 2-keto-4-methylthiobutyrate (KMTB), the alpha-ketoacid precursor of methionine in the methionine recycle pathway. Ni-containing acireductone dioxygenase (Ni-ARD) produces methylthiopropionate, carbon monoxide and formate, and does not lie on the methionine recycle pathway. The protein is Acireductone dioxygenase of Ixodes scapularis (Black-legged tick).